We begin with the raw amino-acid sequence, 167 residues long: NAD(P)H-quinone oxidoreductase subunit I, chloroplastic (167 aa).

2 4Fe-4S ferredoxin-type domains span residues Gly55–Lys84 and Leu95–Glu124. The [4Fe-4S] cluster site is built by Cys64, Cys67, Cys70, Cys74, Cys104, Cys107, Cys110, and Cys114.

Belongs to the complex I 23 kDa subunit family. As to quaternary structure, NDH is composed of at least 16 different subunits, 5 of which are encoded in the nucleus. The cofactor is [4Fe-4S] cluster.

Its subcellular location is the plastid. It localises to the chloroplast thylakoid membrane. It catalyses the reaction a plastoquinone + NADH + (n+1) H(+)(in) = a plastoquinol + NAD(+) + n H(+)(out). It carries out the reaction a plastoquinone + NADPH + (n+1) H(+)(in) = a plastoquinol + NADP(+) + n H(+)(out). Functionally, NDH shuttles electrons from NAD(P)H:plastoquinone, via FMN and iron-sulfur (Fe-S) centers, to quinones in the photosynthetic chain and possibly in a chloroplast respiratory chain. The immediate electron acceptor for the enzyme in this species is believed to be plastoquinone. Couples the redox reaction to proton translocation, and thus conserves the redox energy in a proton gradient. This is NAD(P)H-quinone oxidoreductase subunit I, chloroplastic from Citrus sinensis (Sweet orange).